Consider the following 423-residue polypeptide: Growth hormone-releasing hormone receptor (423 aa).

Residues 1–22 (MDGLMWATRILCLLSLCGVTLG) form the signal peptide. Topologically, residues 23–130 (HLHLECDFIT…KEKSYFSTVK (108 aa)) are extracellular. 3 disulfide bridges follow: C41–C64, C55–C96, and C78–C112. N49 and N50 each carry an N-linked (GlcNAc...) asparagine glycan. Residues 131–151 (IIYTTGHSISIVALCVAIAIL) form a helical membrane-spanning segment. The Cytoplasmic portion of the chain corresponds to 152–167 (VALRRLHCPRNYIHTQ). The helical transmembrane segment at 168 to 188 (LFATFILKASAVFLKDAAIFQ) threads the bilayer. The Extracellular segment spans residues 189–210 (GDSTDHCSMSTVLCKVSVAISH). Residues 211–231 (LATMTNFSWLLAEAVYLSCLL) form a helical membrane-spanning segment. At 232–240 (ASTSPRSKP) the chain is on the cytoplasmic side. A helical membrane pass occupies residues 241–261 (AFWWLVLAGWGLPVLCTGTWV). Residues 262 to 283 (GCKLAFEDTECWDLDNSSPCWW) lie on the Extracellular side of the membrane. The chain crosses the membrane as a helical span at residues 284–304 (IIKGPIVLSVGVNFGLFLNII). At 305–331 (CILLRKLEPAQGGLHTRAQYWRLSKST) the chain is on the cytoplasmic side. Residues 332–352 (LLLIPLFGIHYIIFNFLPDSA) form a helical membrane-spanning segment. At 353 to 357 (GLDIR) the chain is on the extracellular side. Residues 358–378 (VPLELGLGSFQGFIVAVLYCF) traverse the membrane as a helical segment. At 379–423 (LNQEVRTEISRKWYGHDPELLPARRTCTEWTTPPRSRLKVLTSEC) the chain is on the cytoplasmic side.

This sequence belongs to the G-protein coupled receptor 2 family. As to expression, pituitary gland.

The protein localises to the cell membrane. Its function is as follows. Receptor for GRF, coupled to G proteins which activate adenylyl cyclase. Stimulates somatotroph cell growth, growth hormone gene transcription and growth hormone secretion. The protein is Growth hormone-releasing hormone receptor (Ghrhr) of Mus musculus (Mouse).